Reading from the N-terminus, the 227-residue chain is Probable FKBP-type 25 kDa peptidyl-prolyl cis-trans isomerase (227 aa).

Positions Ala-144–Arg-227 constitute a PPIase FKBP-type domain.

It belongs to the FKBP-type PPIase family.

It carries out the reaction [protein]-peptidylproline (omega=180) = [protein]-peptidylproline (omega=0). In terms of biological role, PPIases accelerate the folding of proteins. The sequence is that of Probable FKBP-type 25 kDa peptidyl-prolyl cis-trans isomerase (fkl) from Pseudomonas aeruginosa (strain ATCC 15692 / DSM 22644 / CIP 104116 / JCM 14847 / LMG 12228 / 1C / PRS 101 / PAO1).